Here is a 275-residue protein sequence, read N- to C-terminus: UDP-Gal:alpha-D-GlcNAc-diphosphoundecaprenol beta-1,3-galactosyltransferase (275 aa).

It belongs to the glycosyltransferase 2 family. It depends on Mn(2+) as a cofactor.

Its subcellular location is the cell inner membrane. The enzyme catalyses N-acetyl-alpha-D-glucosaminyl-di-trans,octa-cis-undecaprenyl diphosphate + UDP-alpha-D-galactose = beta-D-Gal-(1-&gt;3)-alpha-D-GlcNAc-di-trans,octa-cis-undecaprenyl diphosphate + UDP + H(+). It participates in bacterial outer membrane biogenesis; LPS O-antigen biosynthesis. Its function is as follows. Catalyzes the addition of Gal, the second sugar moiety of the O7-antigen repeating unit, to GlcNAc-pyrophosphate-undecaprenol. The protein is UDP-Gal:alpha-D-GlcNAc-diphosphoundecaprenol beta-1,3-galactosyltransferase (wbbD) of Escherichia coli.